The sequence spans 368 residues: Agmatine deiminase (368 aa).

Residue Cys357 is the Amidino-cysteine intermediate of the active site.

The protein belongs to the agmatine deiminase family. In terms of assembly, homodimer.

The enzyme catalyses agmatine + H2O = N-carbamoylputrescine + NH4(+). It participates in amine and polyamine biosynthesis; putrescine biosynthesis via agmatine pathway; N-carbamoylputrescine from agmatine: step 1/1. In terms of biological role, mediates the hydrolysis of agmatine into N-carbamoylputrescine in the arginine decarboxylase (ADC) pathway of putrescine biosynthesis, a basic polyamine. The polypeptide is Agmatine deiminase (Pseudomonas fluorescens (strain SBW25)).